Here is a 141-residue protein sequence, read N- to C-terminus: D-aminoacyl-tRNA deacylase (141 aa).

The short motif at 133 to 134 (GP) is the Gly-cisPro motif, important for rejection of L-amino acids element.

The protein belongs to the DTD family. As to quaternary structure, homodimer.

It is found in the cytoplasm. It carries out the reaction glycyl-tRNA(Ala) + H2O = tRNA(Ala) + glycine + H(+). The catalysed reaction is a D-aminoacyl-tRNA + H2O = a tRNA + a D-alpha-amino acid + H(+). An aminoacyl-tRNA editing enzyme that deacylates mischarged D-aminoacyl-tRNAs. Also deacylates mischarged glycyl-tRNA(Ala), protecting cells against glycine mischarging by AlaRS. Acts via tRNA-based rather than protein-based catalysis; rejects L-amino acids rather than detecting D-amino acids in the active site. By recycling D-aminoacyl-tRNA to D-amino acids and free tRNA molecules, this enzyme counteracts the toxicity associated with the formation of D-aminoacyl-tRNA entities in vivo and helps enforce protein L-homochirality. In Kineococcus radiotolerans (strain ATCC BAA-149 / DSM 14245 / SRS30216), this protein is D-aminoacyl-tRNA deacylase.